A 645-amino-acid chain; its full sequence is Nucleolar GTP-binding protein 1 (645 aa).

One can recognise an OBG-type G domain in the interval 168–340; the sequence is RTLLICGYPN…VRNKACEKLL (173 aa). GTP-binding positions include 174–181, 220–224, and 288–291; these read GYPNVGKS, DTPGI, and NKTD. A disordered region spans residues 567-645; the sequence is GQNDSMASGS…KRGIGKSDFR (79 aa). Positions 612–624 are enriched in basic and acidic residues; sequence NRDARQGEADRHA.

The protein belongs to the TRAFAC class OBG-HflX-like GTPase superfamily. OBG GTPase family. NOG subfamily.

The protein localises to the nucleus. It is found in the nucleolus. Involved in the biogenesis of the 60S ribosomal subunit. This Candida glabrata (strain ATCC 2001 / BCRC 20586 / JCM 3761 / NBRC 0622 / NRRL Y-65 / CBS 138) (Yeast) protein is Nucleolar GTP-binding protein 1 (NOG1).